The following is a 541-amino-acid chain: Ascorbate transporter, chloroplastic (541 aa).

The N-terminal 28 residues, 1–28 (MALGGLISNRNFGSFIGSGNGCQRLGKS), are a transit peptide targeting the chloroplast. The next 11 helical transmembrane spans lie at 133–155 (VIVL…MSIA), 170–190 (VGLI…LGGI), 199–219 (VVLG…PIAA), 221–241 (LGLP…GVAM), 263–283 (LVYS…PMLI), 286–306 (FGWP…FLLW), 352–372 (VWAL…LLTW), 390–410 (LLCV…GWIA), 430–450 (IGFL…TPAM), 481–501 (AGVL…FGTA), and 515–535 (VFKV…LFAT).

It belongs to the major facilitator superfamily. Sodium/anion cotransporter (TC 2.A.1.14) family. Expressed in stems, developing siliques, leaf mesophyll cells and sepals of mature flowers. Not detected in roots. Detected in palisade tissue rather than spongy tissue from the leaves.

Its subcellular location is the plastid. It localises to the chloroplast inner membrane. Insensitive to dehydroascorbate, p-isoascorbate, inorganic phosphate, glutamate, ATP, p-aminohippuric acid or tetraethylammonium. Its function is as follows. Inorganic phosphate and probable anion transporter. Ascorbate transporter bridging the chloroplast envelope. Transports ascorbate from the cytosol into the chloroplast. Requires chloride ions and the presence of an electrochemical potential across the membrane for activity. The chain is Ascorbate transporter, chloroplastic (PHT4;4) from Arabidopsis thaliana (Mouse-ear cress).